Reading from the N-terminus, the 323-residue chain is Methenyltetrahydromethanopterin cyclohydrolase (323 aa).

Belongs to the MCH family.

The protein resides in the cytoplasm. It catalyses the reaction 5,10-methenyl-5,6,7,8-tetrahydromethanopterin + H2O = N(5)-formyl-5,6,7,8-tetrahydromethanopterin + H(+). It participates in one-carbon metabolism; methanogenesis from CO(2); 5,10-methenyl-5,6,7,8-tetrahydromethanopterin from CO(2): step 3/3. Its function is as follows. Catalyzes the reversible interconversion of 5-formyl-H(4)MPT to methenyl-H(4)MPT(+). The chain is Methenyltetrahydromethanopterin cyclohydrolase from Methanococcus maripaludis (strain C7 / ATCC BAA-1331).